The chain runs to 157 residues: 2-C-methyl-D-erythritol 2,4-cyclodiphosphate synthase (157 aa).

A divalent metal cation is bound by residues Asp-8 and His-10. 4-CDP-2-C-methyl-D-erythritol 2-phosphate contacts are provided by residues 8 to 10 (DVH) and 34 to 35 (HS). A divalent metal cation is bound at residue His-42. Residues 56–58 (DIG), 61–65 (FPDTD), 100–106 (AQAPKMA), 132–135 (TTTE), Phe-139, and Arg-142 contribute to the 4-CDP-2-C-methyl-D-erythritol 2-phosphate site.

Belongs to the IspF family. Homotrimer. The cofactor is a divalent metal cation.

The enzyme catalyses 4-CDP-2-C-methyl-D-erythritol 2-phosphate = 2-C-methyl-D-erythritol 2,4-cyclic diphosphate + CMP. The protein operates within isoprenoid biosynthesis; isopentenyl diphosphate biosynthesis via DXP pathway; isopentenyl diphosphate from 1-deoxy-D-xylulose 5-phosphate: step 4/6. Its function is as follows. Involved in the biosynthesis of isopentenyl diphosphate (IPP) and dimethylallyl diphosphate (DMAPP), two major building blocks of isoprenoid compounds. Catalyzes the conversion of 4-diphosphocytidyl-2-C-methyl-D-erythritol 2-phosphate (CDP-ME2P) to 2-C-methyl-D-erythritol 2,4-cyclodiphosphate (ME-CPP) with a corresponding release of cytidine 5-monophosphate (CMP). The chain is 2-C-methyl-D-erythritol 2,4-cyclodiphosphate synthase from Pseudomonas putida (strain GB-1).